Here is a 612-residue protein sequence, read N- to C-terminus: uncharacterized protein (612 aa).

Positions 6–32 (CLYCRRRKIKCDKNRPCHNCFVAKREC) form a DNA-binding region, zn(2)-C6 fungal-type.

It is found in the cytoplasm. It localises to the nucleus. This is an uncharacterized protein from Schizosaccharomyces pombe (strain 972 / ATCC 24843) (Fission yeast).